Reading from the N-terminus, the 148-residue chain is UPF0134 protein MPN_410 (148 aa).

It belongs to the UPF0134 family.

The polypeptide is UPF0134 protein MPN_410 (Mycoplasma pneumoniae (strain ATCC 29342 / M129 / Subtype 1) (Mycoplasmoides pneumoniae)).